We begin with the raw amino-acid sequence, 449 residues long: Asparagine--tRNA ligase (449 aa).

Belongs to the class-II aminoacyl-tRNA synthetase family. Homodimer.

It localises to the cytoplasm. It catalyses the reaction tRNA(Asn) + L-asparagine + ATP = L-asparaginyl-tRNA(Asn) + AMP + diphosphate + H(+). This Mesomycoplasma hyopneumoniae (strain 232) (Mycoplasma hyopneumoniae) protein is Asparagine--tRNA ligase.